The sequence spans 82 residues: Putative defensin-like protein 70 (82 aa).

The first 27 residues, 1–27, serve as a signal peptide directing secretion; that stretch reads MKMESSKMLVVFTLMVLIAVSSDLVSG. Disulfide bonds link Cys-39–Cys-80, Cys-43–Cys-66, Cys-52–Cys-78, and Cys-56–Cys-79.

It belongs to the DEFL family.

It localises to the secreted. This chain is Putative defensin-like protein 70 (LCR83), found in Arabidopsis thaliana (Mouse-ear cress).